The sequence spans 95 residues: Large ribosomal subunit protein uL23 (95 aa).

The protein belongs to the universal ribosomal protein uL23 family. As to quaternary structure, part of the 50S ribosomal subunit. Contacts protein L29, and trigger factor when it is bound to the ribosome.

One of the early assembly proteins it binds 23S rRNA. One of the proteins that surrounds the polypeptide exit tunnel on the outside of the ribosome. Forms the main docking site for trigger factor binding to the ribosome. The sequence is that of Large ribosomal subunit protein uL23 from Bacillus pumilus (strain SAFR-032).